The primary structure comprises 644 residues: DNA gyrase subunit B (644 aa).

A Toprim domain is found at 429-543 (CEIFLVEGDS…AGYVYIAQPP (115 aa)). Mg(2+) contacts are provided by Glu-435, Asp-508, and Asp-510.

This sequence belongs to the type II topoisomerase GyrB family. In terms of assembly, heterotetramer, composed of two GyrA and two GyrB chains. In the heterotetramer, GyrA contains the active site tyrosine that forms a transient covalent intermediate with DNA, while GyrB binds cofactors and catalyzes ATP hydrolysis. Mg(2+) serves as cofactor. Requires Mn(2+) as cofactor. It depends on Ca(2+) as a cofactor.

It localises to the cytoplasm. The catalysed reaction is ATP-dependent breakage, passage and rejoining of double-stranded DNA.. Functionally, a type II topoisomerase that negatively supercoils closed circular double-stranded (ds) DNA in an ATP-dependent manner to modulate DNA topology and maintain chromosomes in an underwound state. Negative supercoiling favors strand separation, and DNA replication, transcription, recombination and repair, all of which involve strand separation. Also able to catalyze the interconversion of other topological isomers of dsDNA rings, including catenanes and knotted rings. Type II topoisomerases break and join 2 DNA strands simultaneously in an ATP-dependent manner. This chain is DNA gyrase subunit B, found in Staphylococcus aureus (strain Mu50 / ATCC 700699).